A 542-amino-acid polypeptide reads, in one-letter code: CTP synthase (542 aa).

Residues 1 to 265 are amidoligase domain; that stretch reads MARYVFITGG…DDEVLAAFGI (265 aa). A CTP-binding site is contributed by Ser13. Residue Ser13 coordinates UTP. ATP contacts are provided by residues 14-19 and Asp71; that span reads SLGKGI. Mg(2+) contacts are provided by Asp71 and Glu139. CTP is bound by residues 146–148, 186–191, and Lys222; these read DIE and KTKPTQ. Residues 186 to 191 and Lys222 contribute to the UTP site; that span reads KTKPTQ. The 251-residue stretch at 291–541 folds into the Glutamine amidotransferase type-1 domain; that stretch reads TIAIVGKYTG…IEAATEQSRL (251 aa). Gly353 lines the L-glutamine pocket. Residue Cys380 is the Nucleophile; for glutamine hydrolysis of the active site. L-glutamine-binding positions include 381 to 384, Glu404, and Arg469; that span reads FGMQ. Residues His514 and Glu516 contribute to the active site.

The protein belongs to the CTP synthase family. As to quaternary structure, homotetramer.

It catalyses the reaction UTP + L-glutamine + ATP + H2O = CTP + L-glutamate + ADP + phosphate + 2 H(+). The catalysed reaction is L-glutamine + H2O = L-glutamate + NH4(+). The enzyme catalyses UTP + NH4(+) + ATP = CTP + ADP + phosphate + 2 H(+). It functions in the pathway pyrimidine metabolism; CTP biosynthesis via de novo pathway; CTP from UDP: step 2/2. Allosterically activated by GTP, when glutamine is the substrate; GTP has no effect on the reaction when ammonia is the substrate. The allosteric effector GTP functions by stabilizing the protein conformation that binds the tetrahedral intermediate(s) formed during glutamine hydrolysis. Inhibited by the product CTP, via allosteric rather than competitive inhibition. Functionally, catalyzes the ATP-dependent amination of UTP to CTP with either L-glutamine or ammonia as the source of nitrogen. Regulates intracellular CTP levels through interactions with the four ribonucleotide triphosphates. In Rhizobium leguminosarum bv. trifolii (strain WSM2304), this protein is CTP synthase.